Consider the following 111-residue polypeptide: Cell division protein FtsB (111 aa).

Over 1–3 the chain is Cytoplasmic; the sequence is MRL. Residues 4 to 21 traverse the membrane as a helical segment; it reads ITLFLLLLLLAIQYPLWL. The Periplasmic segment spans residues 22-111; sequence GKGGWLRVWD…PPPAGQQAHH (90 aa). The stretch at 31–64 forms a coiled coil; the sequence is DMQKQVTAQNQRNAELKQRNTKLEGEVKDLKEGT. Residues 89 to 111 are disordered; it reads APAPKTSETPLPPPPPAGQQAHH.

Belongs to the FtsB family. In terms of assembly, part of a complex composed of FtsB, FtsL and FtsQ.

It localises to the cell inner membrane. Essential cell division protein. May link together the upstream cell division proteins, which are predominantly cytoplasmic, with the downstream cell division proteins, which are predominantly periplasmic. The chain is Cell division protein FtsB from Ralstonia pickettii (strain 12J).